The primary structure comprises 351 residues: O-methyltransferase apf6 (351 aa).

Residues 231 to 232 (GG), 279 to 280 (NF), and R295 each bind S-adenosyl-L-methionine. Catalysis depends on H299, which acts as the Proton acceptor.

The protein belongs to the class I-like SAM-binding methyltransferase superfamily. Cation-independent O-methyltransferase family.

It functions in the pathway secondary metabolite biosynthesis. In terms of biological role, O-methyltransferase; part of the gene cluster that mediates the biosynthesis of the cyclic tetrapeptide apicidin F (APF). The non-ribosomal peptide synthetase apf1 incorporates four different amino acids to produce apicidin F: L-phenylalanine, D-pipecolic acid (D-pip), N-methoxy-L-tryptophan and L-2-aminooctanedioic acid. L-Phenylalanine is the only proteinogenic amino acid directly used by apf1. The 3 other apf1 substrates are non-proteinogenic and have to be modified by other enzymes of the cluster. Lysine is converted to delta-1-pyrroline-5-carboxylate (P5C) which is reduced to L-pipecolic acid (L-pip) by apf3. L-pip is epimerized to D-pip, probably by apf1 activity, prior to incorporation. L-Tryptophan is N-oxidyzed by one of the cytochrome P450 monooxygenases (apf7 or apf8), and further methylated at the hydroxy group by the O-methyltransferase apf6 to yield N-methoxy-L-tryptophan. The synthesis of the fourth apf1 substrate is more complex. The fatty acid synthase apf5 is involved in the synthesis of the octanoic acid backbone of L-2-aminooctanedioic acid by fixing one acetyl-CoA unit and three malonyl-CoA units. Then one of the cytochrome P450 monooxygenases (apf7 or apf8) may oxidize this backbone to 2-oxooctanoic acid. The aminotransferase apf4 is predicted to catalyze the exchange of the keto group with an amino group. The next step would be the oxidation of 2-aminooctanoic acid by one of the cytochrome P450 monooxygenases (apf7 or apf8). The last step is the oxidation of 2-amino-8-hydroxyoctanoic acid to 2-aminooctanedioic acid is catalyzed by the FAD-dependent monooxygenase apf9. This is O-methyltransferase apf6 from Gibberella fujikuroi (strain CBS 195.34 / IMI 58289 / NRRL A-6831) (Bakanae and foot rot disease fungus).